Reading from the N-terminus, the 315-residue chain is Three-prime repair exonuclease 1 (315 aa).

2 residues coordinate Mg(2+): D18 and E20. E20–A21 is a binding site for substrate. S78 is subject to Phosphoserine. Y129 serves as a coordination point for substrate. Phosphoserine is present on S167. Residue H195 is the Proton donor/acceptor of the active site. A Mg(2+)-binding site is contributed by D200. D200 provides a ligand contact to substrate. Residues T236–Q315 are necessary for endoplasmic reticulum localization. The interaction with UBQLN1 stretch occupies residues P243–Q315. A disordered region spans residues R256–A282. A compositionally biased stretch (pro residues) spans K271–A282. The interval A282–Q315 is necessary for cytoplasmic retention.

This sequence belongs to the exonuclease superfamily. TREX family. In terms of assembly, homodimer. Interacts (via proline-rich region) with TCERG1/CA150 (via the second WW domain). Component of the SET complex, composed of at least ANP32A, APEX1, HMGB2, NME1, SET and TREX1. Within this complex, directly interacts with SET; this interaction does not result in TREX1 inhibition. Also interacts with NME1, but only following translocation to the nucleus. Directly interacts with UBQLN1 (via ubiquitin-like domain); the interaction may control TREX1 subcellular location. It depends on Mg(2+) as a cofactor. In terms of processing, ubiquitinated, but not targeted to proteasomal degradation. Ubiquitination may be important for interaction with UBQLN1.

The protein localises to the nucleus. It localises to the cytoplasm. It is found in the cytosol. The protein resides in the endoplasmic reticulum membrane. It catalyses the reaction Exonucleolytic cleavage in the 3'- to 5'-direction to yield nucleoside 5'-phosphates.. Functionally, major cellular 3'-to-5' DNA exonuclease which digests single-stranded DNA (ssDNA) and double-stranded DNA (dsDNA) with mismatched 3' termini. Prevents cell-intrinsic initiation of autoimmunity. Acts by metabolizing DNA fragments from endogenous retroelements, including L1, LTR and SINE elements. Plays a key role in degradation of DNA fragments at cytosolic micronuclei arising from genome instability: its association with the endoplasmic reticulum membrane directs TREX1 to ruptured micronuclei, leading to micronuclear DNA degradation. Micronuclear DNA degradation is required to limit CGAS activation and subsequent inflammation. Unless degraded, these DNA fragments accumulate in the cytosol and activate the cGAS-STING innate immune signaling, leading to the production of type I interferon. Prevents chronic ATM-dependent checkpoint activation, by processing ssDNA polynucleotide species arising from the processing of aberrant DNA replication intermediates. Inefficiently degrades oxidized DNA, such as that generated upon antimicrobial reactive oxygen production or upon absorption of UV light. During GZMA-mediated cell death, contributes to DNA damage in concert with NME1. NME1 nicks one strand of DNA and TREX1 removes bases from the free 3' end to enhance DNA damage and prevent DNA end reannealing and rapid repair. This is Three-prime repair exonuclease 1 from Bos taurus (Bovine).